A 1427-amino-acid chain; its full sequence is Multidrug resistance-associated protein 5 (1427 aa).

Over 1–147 the chain is Cytoplasmic; that stretch reads MPSDSEEVCL…IYRFISTRLW (147 aa). Residues 148–168 form a helical membrane-spanning segment; sequence FSCAVFFFCLIFGFIGPTCFI. The ABC transmembrane type-1 1 domain maps to 151–432; that stretch reads AVFFFCLIFG…IPYGSRYLAE (282 aa). Topologically, residues 169 to 185 are extracellular; the sequence is RRLIAFAENPERDEQSR. Residues 186–206 form a helical membrane-spanning segment; sequence IVYSYGIALVAAISVVEFARV. Topologically, residues 207 to 268 are cytoplasmic; sequence LSYGATWAVS…RLFDAVTFAP (62 aa). Residues 269-289 traverse the membrane as a helical segment; it reads LVLVGPLVLVGGIGYLLMVIG. Residue Arg-290 is a topological domain, extracellular. A helical membrane pass occupies residues 291 to 311; the sequence is WSLLGILVFFVFDVIQFGLGK. Topologically, residues 312–375 are cytoplasmic; sequence SMVACRNLAI…RKSGYAQSLA (64 aa). The helical transmembrane segment at 376–396 threads the bilayer; sequence IACGPVVPVVAAILTFVGVVL. At 397-399 the chain is on the extracellular side; sequence AGN. Residues 400–420 traverse the membrane as a helical segment; it reads DLLASDAFSAITVYFVMLFGI. Topologically, residues 421 to 770 are cytoplasmic; that stretch reads RMIPYGSRYL…TIAWRIYKQY (350 aa). Residues 486–707 enclose the ABC transporter 1 domain; that stretch reads PTENEVIVVE…NDAYKTFVDA (222 aa). Position 518 to 525 (518 to 525) interacts with ATP; that stretch reads GAVGCGKS. The helical transmembrane segment at 771–791 threads the bilayer; sequence IHAAGGWPIWTCLVIGFIVNV. The region spanning 783-1078 is the ABC transmembrane type-1 2 domain; that stretch reads LVIGFIVNVV…AVRTQTELEA (296 aa). At 792–833 the chain is on the extracellular side; that stretch reads VSNIFSTYWLSRWLKKGHDETTTITNGTEFLEMKTSLADSPV. Residue Asn-817 is glycosylated (N-linked (GlcNAc...) asparagine). The chain crosses the membrane as a helical span at residues 834 to 854; sequence TGFYAAVYLVALVVLTISGLF. The Cytoplasmic segment spans residues 855 to 909; that stretch reads KACVFVKVSLTAATRLHDRMFQAVIHGATSFFDSTPTGRILNRFSKDMDEIDVKL. Residues 910–930 form a helical membrane-spanning segment; that stretch reads PFTAEVFLQNMITCLGFLVVI. A topological domain (extracellular) is located at residue Thr-931. The helical transmembrane segment at 932–952 threads the bilayer; it reads SVFPYFLLFAIPLFVVFVVFV. At 953-1022 the chain is on the cytoplasmic side; that stretch reads SCFRAGIRNL…MFQSAMRWLA (70 aa). Residues 1023-1043 traverse the membrane as a helical segment; sequence VWLDLLVVVMTAIVALLTVML. Over 1044–1049 the chain is Extracellular; the sequence is TGTVSP. The helical transmembrane segment at 1050 to 1070 threads the bilayer; the sequence is ADAGMAIAFAVQMSGIFQFAV. The Cytoplasmic portion of the chain corresponds to 1071–1427; sequence RTQTELEAKM…SSDTDIEVVQ (357 aa). Positions 1117–1351 constitute an ABC transporter 2 domain; it reads INFSEVNLRY…DWSVYKLEDK (235 aa). 1151 to 1158 serves as a coordination point for ATP; the sequence is GRTGSGKS. The segment at 1361 to 1427 is disordered; that stretch reads VGENSEHSME…SSDTDIEVVQ (67 aa). A compositionally biased stretch (basic and acidic residues) spans 1382 to 1418; it reads DIVKVENEQKDSSDDVVHIESGDDDVKADSSEVKETS.

This sequence belongs to the ABC transporter superfamily. ABCC family. Conjugate transporter (TC 3.A.1.208) subfamily. As to expression, highly expressed in the intestine and pharynx. Expressed at low levels in the hypodermis and in some neurons.

Its subcellular location is the basolateral cell membrane. In terms of biological role, heme transporter required for the export of intestinal heme to different tissues and subcellular compartments. Also, required for the export of vitamin B12 from the intestine of the mother to the embryo to support embryonic development. The polypeptide is Multidrug resistance-associated protein 5 (Caenorhabditis elegans).